The sequence spans 131 residues: Small ribosomal subunit protein uS11 (131 aa).

The protein belongs to the universal ribosomal protein uS11 family. Part of the 30S ribosomal subunit. Interacts with proteins S7 and S18. Binds to IF-3.

Functionally, located on the platform of the 30S subunit, it bridges several disparate RNA helices of the 16S rRNA. Forms part of the Shine-Dalgarno cleft in the 70S ribosome. The chain is Small ribosomal subunit protein uS11 from Pelobacter propionicus (strain DSM 2379 / NBRC 103807 / OttBd1).